The sequence spans 156 residues: UPF0336 protein SACE_6876 (156 aa).

The 121-residue stretch at 8-128 (IGREYPPTPA…DFLTVRAEIT (121 aa)) folds into the MaoC-like domain.

It belongs to the UPF0336 family.

The chain is UPF0336 protein SACE_6876 from Saccharopolyspora erythraea (strain ATCC 11635 / DSM 40517 / JCM 4748 / NBRC 13426 / NCIMB 8594 / NRRL 2338).